The primary structure comprises 317 residues: L-lactate dehydrogenase 2 (317 aa).

Residues Val16, Asp37, Lys42, Tyr68, and 82 to 83 (GA) contribute to the NAD(+) site. 2 residues coordinate substrate: Gln85 and Arg91. NAD(+)-binding positions include Thr104, 121-123 (ASN), and Thr146. 123-126 (NPVD) lines the substrate pocket. 151-154 (DTTR) contributes to the substrate binding site. Beta-D-fructose 1,6-bisphosphate contacts are provided by Arg156 and His171. The Proton acceptor role is filled by His178. Tyr223 is modified (phosphotyrosine). Thr232 is a substrate binding site.

This sequence belongs to the LDH/MDH superfamily. LDH family. Homotetramer.

It is found in the cytoplasm. The catalysed reaction is (S)-lactate + NAD(+) = pyruvate + NADH + H(+). Its pathway is fermentation; pyruvate fermentation to lactate; (S)-lactate from pyruvate: step 1/1. With respect to regulation, allosterically activated by fructose 1,6-bisphosphate (FBP). In terms of biological role, catalyzes the conversion of lactate to pyruvate. This chain is L-lactate dehydrogenase 2, found in Enterococcus faecalis (strain ATCC 700802 / V583).